The following is a 277-amino-acid chain: S-formylglutathione hydrolase FrmB (277 aa).

Residues Ser145, Asp221, and His254 each act as charge relay system in the active site.

Belongs to the esterase D family.

It carries out the reaction S-formylglutathione + H2O = formate + glutathione + H(+). Its function is as follows. Serine hydrolase involved in the detoxification of formaldehyde. Hydrolyzes S-formylglutathione to glutathione and formate. The polypeptide is S-formylglutathione hydrolase FrmB (frmB) (Escherichia coli (strain K12 / DH10B)).